Reading from the N-terminus, the 408-residue chain is Na(+)-translocating NADH-quinone reductase subunit F (408 aa).

A helical transmembrane segment spans residues 6-26; the sequence is IILGVVMFTAIVLALVAIILA. A 2Fe-2S ferredoxin-type domain is found at 35-127; the sequence is GDVTIRINGE…DMDVEVPEEV (93 aa). [2Fe-2S] cluster-binding residues include Cys70, Cys76, Cys79, and Cys111. Residues 130 to 270 form the FAD-binding FR-type domain; the sequence is VKAWECTVES…YGPFGEFFAK (141 aa).

This sequence belongs to the NqrF family. Composed of six subunits; NqrA, NqrB, NqrC, NqrD, NqrE and NqrF. Requires [2Fe-2S] cluster as cofactor. FAD serves as cofactor.

The protein localises to the cell inner membrane. It catalyses the reaction a ubiquinone + n Na(+)(in) + NADH + H(+) = a ubiquinol + n Na(+)(out) + NAD(+). NQR complex catalyzes the reduction of ubiquinone-1 to ubiquinol by two successive reactions, coupled with the transport of Na(+) ions from the cytoplasm to the periplasm. The first step is catalyzed by NqrF, which accepts electrons from NADH and reduces ubiquinone-1 to ubisemiquinone by a one-electron transfer pathway. This is Na(+)-translocating NADH-quinone reductase subunit F from Marinomonas sp. (strain MWYL1).